The primary structure comprises 128 residues: SH2 domain-containing protein 1A (128 aa).

One can recognise an SH2 domain in the interval 6 to 102 (VYHGKISRET…GIVIPLQYPV (97 aa)). Residues 67–92 (ETAPGVHKRYFRKIKNLISAFQKPDQ) form an interaction with FYN SH3 domain region. K89 carries the N6-acetyllysine modification. Residues 106–128 (SSARSTQGTTGIREDPDVCLKAP) are disordered. The span at 117–128 (IREDPDVCLKAP) shows a compositional bias: basic and acidic residues.

As to quaternary structure, interacts with CD84, CD244, LY9, SLAMF1 and FYN. Interacts with NTRK1, NTRK2 and NTRK3.

The protein resides in the cytoplasm. In terms of biological role, cytoplasmic adapter regulating receptors of the signaling lymphocytic activation molecule (SLAM) family such as SLAMF1, CD244, LY9, CD84, SLAMF6 and SLAMF7. In SLAM signaling seems to cooperate with SH2D1B/EAT-2. Initially it has been proposed that association with SLAMF1 prevents SLAMF1 binding to inhibitory effectors including INPP5D/SHIP1 and PTPN11/SHP-2. However, by simultaneous interactions, recruits FYN which subsequently phosphorylates and activates SLAMF1. Positively regulates CD244/2B4- and CD84-mediated natural killer (NK) cell functions. Can also promote CD48-, SLAMF6 -, LY9-, and SLAMF7-mediated NK cell activation. In the context of NK cell-mediated cytotoxicity enhances conjugate formation with target cells. May also regulate the activity of the neurotrophin receptors NTRK1, NTRK2 and NTRK3. This chain is SH2 domain-containing protein 1A (SH2D1A), found in Macaca mulatta (Rhesus macaque).